Consider the following 204-residue polypeptide: CASP-like protein 1B2 (204 aa).

The Cytoplasmic portion of the chain corresponds to 1–28; that stretch reads MASKGEEKPELVGSKQGIVSVTKAKHDQ. A helical transmembrane segment spans residues 29–49; the sequence is IVLVLRVVAFLATASATIVMG. The Extracellular segment spans residues 50–80; sequence LNQETKTLLVGTIGTTPIRATLKAKFQHTPA. A helical transmembrane segment spans residues 81–101; sequence FVFFVVANGLASVYNLVMLGV. Residues 102-114 lie on the Cytoplasmic side of the membrane; sequence DVFGRKLDCKGLR. A helical transmembrane segment spans residues 115 to 135; the sequence is LVIISILDMVIVAVVAAGASS. Over 136 to 168 the chain is Extracellular; the sequence is AAFMAELGKNGNSHAKWNKICDKFESFCHQGGG. Residues 169–189 form a helical membrane-spanning segment; sequence ALIPSFIALLLLFLISAISII. Topologically, residues 190 to 204 are cytoplasmic; the sequence is TLHNQKLTSPHATTP.

It belongs to the Casparian strip membrane proteins (CASP) family. As to quaternary structure, homodimer and heterodimers.

It localises to the cell membrane. This Vitis vinifera (Grape) protein is CASP-like protein 1B2.